The primary structure comprises 531 residues: Bifunctional protein TrpGD (531 aa).

Residues 3–196 (DILLLDNIDS…LAWAQQKLEP (194 aa)) enclose the Glutamine amidotransferase type-1 domain. 57–59 (GPG) is a binding site for L-glutamine. Residue cysteine 84 is the Nucleophile; for GATase activity of the active site. L-glutamine contacts are provided by residues glutamine 88 and 134-135 (SL). Catalysis depends on for GATase activity residues histidine 170 and glutamate 172. The tract at residues 202 to 531 (PILEKLYQAQ…DRVTALAARG (330 aa)) is anthranilate phosphoribosyltransferase.

It in the C-terminal section; belongs to the anthranilate phosphoribosyltransferase family. Monomer. Heterotetramer consisting of two non-identical subunits: a beta subunit (TrpG) and a large alpha subunit (TrpE).

It carries out the reaction chorismate + L-glutamine = anthranilate + pyruvate + L-glutamate + H(+). It catalyses the reaction N-(5-phospho-beta-D-ribosyl)anthranilate + diphosphate = 5-phospho-alpha-D-ribose 1-diphosphate + anthranilate. The protein operates within amino-acid biosynthesis; L-tryptophan biosynthesis; L-tryptophan from chorismate: step 1/5. It functions in the pathway amino-acid biosynthesis; L-tryptophan biosynthesis; L-tryptophan from chorismate: step 2/5. Its activity is regulated as follows. Cooperatively feedback inhibited by tryptophan. Functionally, part of a heterotetrameric complex that catalyzes the two-step biosynthesis of anthranilate, an intermediate in the biosynthesis of L-tryptophan. In the first step, the glutamine-binding beta subunit (TrpG) of anthranilate synthase (AS) provides the glutamine amidotransferase activity which generates ammonia as a substrate that, along with chorismate, is used in the second step, catalyzed by the large alpha subunit of AS (TrpE) to produce anthranilate. In the absence of TrpG, TrpE can synthesize anthranilate directly from chorismate and high concentrations of ammonia. In addition to synthesizing anthranilate, it also catalyzes the second step of the pathway, the transfer of the phosphoribosyl group of 5-phosphorylribose-1-pyrophosphate (PRPP) to anthranilate. This Salmonella typhimurium (strain LT2 / SGSC1412 / ATCC 700720) protein is Bifunctional protein TrpGD (trpGD).